The chain runs to 406 residues: MKATCWILAGFCLLFCCKAEEGLNFPTYDGKDRVIDLNEKNYKHALKKYDMLCLLFHEPVSSDRVSQKQFQMTEMVLELAAQVLEPRSIGFGMVDSKKDAKLAKKLGLVEEGSLYVFKEERLIEFDGELATDVLVEFLLDLLEDPVEVINSKLELQAFDQIDDEIKLIGYFKGEDSEHYKAFEEAAEHFQPYVKFFATFDKGVAKKLGLKMNEVDFYEPFMDEPVHIPDKPYTEEELVEFVKEHKRATLRKLRPEDMFETWEDDMEGIHIVAFAEEDDPDGFEFLEILKQVARDNTDNPDLSIVWIDPDDFPLLITYWEKTFKIDLFRPQIGIVNVTDADSVWMEIRDDDDLPTAEELEDWIEDVLSGKINTEDDDDDDDDDDDDDDDDDDDDDDDDDDDDDDDDD.

The N-terminal stretch at 1–19 is a signal peptide; the sequence is MKATCWILAGFCLLFCCKA. Asparagine 335 is a glycosylation site (N-linked (GlcNAc...) asparagine). Positions 365–406 are disordered; sequence VLSGKINTEDDDDDDDDDDDDDDDDDDDDDDDDDDDDDDDDD. A compositionally biased stretch (acidic residues) spans 373–406; the sequence is EDDDDDDDDDDDDDDDDDDDDDDDDDDDDDDDDD.

This sequence belongs to the calsequestrin family. In terms of tissue distribution, skeletal and heart muscle.

The protein resides in the sarcoplasmic reticulum lumen. Calsequestrin is a high-capacity, moderate affinity, calcium-binding protein and thus acts as an internal calcium store in muscle. Calcium ions are bound by clusters of acidic residues at the protein surface, especially at the interface between subunits. Can bind around 60 Ca(2+) ions. Regulates the release of lumenal Ca(2+) via the calcium release channel RYR2; this plays an important role in triggering muscle contraction. Plays a role in excitation-contraction coupling in the heart and in regulating the rate of heart beats. The polypeptide is Calsequestrin-2 (CASQ2) (Gallus gallus (Chicken)).